The primary structure comprises 333 residues: Torsin-1A (333 aa).

Residues 1-20 (MKLGRAALALLLLAPCVVRA) form the signal peptide. An interaction with SNAPIN region spans residues 92 to 252 (KPKKPLTLSL…VSVFNNKNSG (161 aa)). ATP is bound at residue 103-110 (GWTGTGKN). Residues Asn-144 and Asn-159 are each glycosylated (N-linked (GlcNAc...) asparagine). The segment at 252–333 (GFWHSSLIDR…FTKLDYYLDD (82 aa)) is interaction with KLC1. Residues 313 to 333 (KVFSDKGCKTVFTKLDYYLDD) are interaction with SYNE3.

Belongs to the ClpA/ClpB family. Torsin subfamily. As to quaternary structure, homohexamer. Interacts with TOR1B; the interaction may be specific of neural tissues. Interacts (ATP-bound) with TOR1AIP1 and TOR1AIP2; the interactions induce ATPase activity. Interacts with KLHL14; preferentially when ATP-free. Interacts with KLC1 (via TPR repeats); the interaction associates TOR1A with the kinesin oligomeric complex. Interacts with COPS4; the interaction associates TOR1A with the CSN complex. Interacts with SNAPIN; the interaction is direct and associates SNAPIN with the CSN complex. Interacts with STON2. Interacts (ATP-bound) with SYNE3 (via KASH domain); the interaction is required for SYNE3 nuclear envelope localization. Interacts with VIM; the interaction associates TOR1A with the cytoskeleton. Interacts with PLEC. Interacts (ATP-bound) with SLC6A3; regulates SLC6A3 transport to the plasma membrane. Post-translationally, N-glycosylated. As to expression, widely expressed (at protein level).

The protein resides in the endoplasmic reticulum lumen. It is found in the nucleus membrane. Its subcellular location is the cell projection. It localises to the growth cone. The protein localises to the cytoplasmic vesicle membrane. The protein resides in the synapse. It is found in the synaptosome. Its subcellular location is the cytoplasm. It localises to the cytoskeleton. The protein localises to the cytoplasmic vesicle. The protein resides in the secretory vesicle. It is found in the synaptic vesicle. It catalyses the reaction ATP + H2O = ADP + phosphate + H(+). Functionally, protein with chaperone functions important for the control of protein folding, processing, stability and localization as well as for the reduction of misfolded protein aggregates. Involved in the regulation of synaptic vesicle recycling, controls STON2 protein stability in collaboration with the COP9 signalosome complex (CSN). In the nucleus, may link the cytoskeleton with the nuclear envelope, this mechanism seems to be crucial for the control of nuclear polarity, cell movement and, specifically in neurons, nuclear envelope integrity. Participates in the cellular trafficking and may regulate the subcellular location of multipass membrane proteins such as the dopamine transporter SLC6A3, leading to the modulation of dopamine neurotransmission. In the endoplasmic reticulum, plays a role in the quality control of protein folding by increasing clearance of misfolded proteins such as SGCE variants or holding them in an intermediate state for proper refolding. May have a redundant function with TOR1B in non-neural tissues. The polypeptide is Torsin-1A (Tor1a) (Mus musculus (Mouse)).